The chain runs to 443 residues: 26S proteasome regulatory subunit 4 homolog B (443 aa).

Disordered stretches follow at residues 1–55 (MGQG…LPTV) and 87–108 (RLKPQEEKAEEDRSKVDDLRGT). 2 stretches are compositionally biased toward basic and acidic residues: residues 12–28 (QGDRKPDGGEKKEKKFE) and 87–106 (RLKPQEEKAEEDRSKVDDLR). ATP is bound at residue 229 to 236 (GEPGTGKT). Residues K296 and K433 each participate in a glycyl lysine isopeptide (Lys-Gly) (interchain with G-Cter in ubiquitin) cross-link.

It belongs to the AAA ATPase family. In terms of assembly, component of the 19S regulatory particle (RP/PA700) base subcomplex of the 26S proteasome. The 26S proteasome is composed of a core protease (CP), known as the 20S proteasome, capped at one or both ends by the 19S regulatory particle (RP/PA700). The RP/PA700 complex is composed of at least 17 different subunits in two subcomplexes, the base and the lid, which form the portions proximal and distal to the 20S proteolytic core, respectively. As to expression, preferentially expressed in the root and shoot apical meristem.

The protein localises to the cytoplasm. It is found in the nucleus. In terms of biological role, the 26S protease is involved in the ATP-dependent degradation of ubiquitinated proteins. The regulatory (or ATPase) complex confers ATP dependency and substrate specificity to the 26S complex. Acts redundantly with RPT2A in the regulation of gametogenesis. With RPT2A plays a critical role in 26S proteasome assembly. This is 26S proteasome regulatory subunit 4 homolog B from Arabidopsis thaliana (Mouse-ear cress).